We begin with the raw amino-acid sequence, 671 residues long: DNA ligase (671 aa).

Residues 32–36 (DAEYD), 81–82 (SL), and Glu-113 contribute to the NAD(+) site. Lys-115 (N6-AMP-lysine intermediate) is an active-site residue. NAD(+)-binding residues include Arg-136, Glu-173, Lys-290, and Lys-314. The Zn(2+) site is built by Cys-408, Cys-411, Cys-426, and Cys-432. One can recognise a BRCT domain in the interval 593–671 (EIDSPFAGKT…EAEMLRLLGS (79 aa)).

This sequence belongs to the NAD-dependent DNA ligase family. LigA subfamily. Mg(2+) is required as a cofactor. Requires Mn(2+) as cofactor.

It catalyses the reaction NAD(+) + (deoxyribonucleotide)n-3'-hydroxyl + 5'-phospho-(deoxyribonucleotide)m = (deoxyribonucleotide)n+m + AMP + beta-nicotinamide D-nucleotide.. Its function is as follows. DNA ligase that catalyzes the formation of phosphodiester linkages between 5'-phosphoryl and 3'-hydroxyl groups in double-stranded DNA using NAD as a coenzyme and as the energy source for the reaction. It is essential for DNA replication and repair of damaged DNA. This chain is DNA ligase, found in Escherichia coli (strain ATCC 8739 / DSM 1576 / NBRC 3972 / NCIMB 8545 / WDCM 00012 / Crooks).